We begin with the raw amino-acid sequence, 427 residues long: 3-phosphoshikimate 1-carboxyvinyltransferase (427 aa).

3 residues coordinate 3-phosphoshikimate: Lys-20, Ser-21, and Arg-25. Position 20 (Lys-20) interacts with phosphoenolpyruvate. Residues Gly-92 and Arg-120 each contribute to the phosphoenolpyruvate site. Positions 166, 168, 312, and 339 each coordinate 3-phosphoshikimate. Gln-168 is a phosphoenolpyruvate binding site. The Proton acceptor role is filled by Asp-312. Phosphoenolpyruvate contacts are provided by Arg-343 and Arg-385.

This sequence belongs to the EPSP synthase family. As to quaternary structure, monomer.

The protein localises to the cytoplasm. It carries out the reaction 3-phosphoshikimate + phosphoenolpyruvate = 5-O-(1-carboxyvinyl)-3-phosphoshikimate + phosphate. It functions in the pathway metabolic intermediate biosynthesis; chorismate biosynthesis; chorismate from D-erythrose 4-phosphate and phosphoenolpyruvate: step 6/7. Catalyzes the transfer of the enolpyruvyl moiety of phosphoenolpyruvate (PEP) to the 5-hydroxyl of shikimate-3-phosphate (S3P) to produce enolpyruvyl shikimate-3-phosphate and inorganic phosphate. The sequence is that of 3-phosphoshikimate 1-carboxyvinyltransferase from Streptococcus thermophilus (strain ATCC BAA-250 / LMG 18311).